The following is a 180-amino-acid chain: Beta-lactoglobulin (180 aa).

A signal peptide spans 1-18 (MKCLLLALGLALACAAQA). 3 cysteine pairs are disulfide-bonded: cysteine 84/cysteine 178, cysteine 124/cysteine 137, and cysteine 124/cysteine 139.

Belongs to the calycin superfamily. Lipocalin family. Under physiological conditions beta-lactoglobulin exists as an equilibrium mixture of monomeric and dimeric forms. Interaction with LMBR1L is controversial. In terms of processing, alternate disulfide bonds occur in equal amounts. Synthesized in mammary gland and secreted in milk.

Its subcellular location is the secreted. Its function is as follows. Primary component of whey, it binds retinol and is probably involved in the transport of that molecule. This chain is Beta-lactoglobulin (LGB), found in Bubalus bubalis (Domestic water buffalo).